A 407-amino-acid polypeptide reads, in one-letter code: 1-deoxy-D-xylulose 5-phosphate reductoisomerase (407 aa).

NADPH-binding residues include threonine 25, glycine 26, serine 27, isoleucine 28, asparagine 53, and asparagine 136. Lysine 137 contributes to the 1-deoxy-D-xylulose 5-phosphate binding site. Residue glutamate 138 coordinates NADPH. Aspartate 162 is a binding site for Mn(2+). 1-deoxy-D-xylulose 5-phosphate contacts are provided by serine 163, glutamate 164, serine 188, and histidine 211. Glutamate 164 is a Mn(2+) binding site. Glycine 217 is a binding site for NADPH. Serine 224, asparagine 229, lysine 230, and glutamate 233 together coordinate 1-deoxy-D-xylulose 5-phosphate. Glutamate 233 lines the Mn(2+) pocket.

It belongs to the DXR family. The cofactor is Mg(2+). Requires Mn(2+) as cofactor.

The catalysed reaction is 2-C-methyl-D-erythritol 4-phosphate + NADP(+) = 1-deoxy-D-xylulose 5-phosphate + NADPH + H(+). Its pathway is isoprenoid biosynthesis; isopentenyl diphosphate biosynthesis via DXP pathway; isopentenyl diphosphate from 1-deoxy-D-xylulose 5-phosphate: step 1/6. Functionally, catalyzes the NADPH-dependent rearrangement and reduction of 1-deoxy-D-xylulose-5-phosphate (DXP) to 2-C-methyl-D-erythritol 4-phosphate (MEP). The polypeptide is 1-deoxy-D-xylulose 5-phosphate reductoisomerase (Rhodopseudomonas palustris (strain BisB5)).